Consider the following 491-residue polypeptide: Glutamate--tRNA ligase (491 aa).

A 'HIGH' region motif is present at residues 13–23 (PSPTGFLHIGN). Positions 110, 112, 137, and 139 each coordinate Zn(2+). Residues 254–258 (KLSKR) carry the 'KMSKS' region motif. ATP is bound at residue Lys-257.

Belongs to the class-I aminoacyl-tRNA synthetase family. Glutamate--tRNA ligase type 1 subfamily. As to quaternary structure, monomer. Zn(2+) serves as cofactor.

Its subcellular location is the cytoplasm. The enzyme catalyses tRNA(Glu) + L-glutamate + ATP = L-glutamyl-tRNA(Glu) + AMP + diphosphate. In terms of biological role, catalyzes the attachment of glutamate to tRNA(Glu) in a two-step reaction: glutamate is first activated by ATP to form Glu-AMP and then transferred to the acceptor end of tRNA(Glu). The protein is Glutamate--tRNA ligase of Listeria monocytogenes serovar 1/2a (strain ATCC BAA-679 / EGD-e).